The chain runs to 229 residues: Large ribosomal subunit protein uL1 (229 aa).

Part of the 50S ribosomal subunit.

Its function is as follows. Binds directly to 23S rRNA. The L1 stalk is quite mobile in the ribosome, and is involved in E site tRNA release. In terms of biological role, protein L1 is also a translational repressor protein, it controls the translation of the L11 operon by binding to its mRNA. This Rhodopseudomonas palustris (strain ATCC BAA-98 / CGA009) protein is Large ribosomal subunit protein uL1.